Here is a 69-residue protein sequence, read N- to C-terminus: EPDSAADTGTEAACSNYDLKKGCAKIFDPVCGTDNILYSNECLLCFQNLQRKTNVRIKRRGTCQEPSPR.

The region spanning 8–65 (TGTEAACSNYDLKKGCAKIFDPVCGTDNILYSNECLLCFQNLQRKTNVRIKRRGTCQE) is the Kazal-like domain. Disulfide bonds link cysteine 14/cysteine 45, cysteine 23/cysteine 42, and cysteine 31/cysteine 63.

The protein resides in the secreted. This is a trypsin inhibitor, its physiological function is to prevent the trypsin-catalyzed premature activation of zymogens within the pancreas. This is Pancreatic secretory trypsin inhibitor (SPINK1) from Struthio camelus (Common ostrich).